A 454-amino-acid polypeptide reads, in one-letter code: tRNA modification GTPase MnmE (454 aa).

Positions 23, 80, and 120 each coordinate (6S)-5-formyl-5,6,7,8-tetrahydrofolate. A TrmE-type G domain is found at 216 to 377 (GMKVVIAGRP…LRDHLKQSMG (162 aa)). Residue N226 participates in K(+) binding. Residues 226-231 (NAGKSS), 245-251 (TDIAGTT), 270-273 (DTAG), 335-338 (NKAD), and 358-360 (SAR) each bind GTP. S230 contacts Mg(2+). K(+) is bound by residues T245, I247, and T250. T251 provides a ligand contact to Mg(2+). K454 contributes to the (6S)-5-formyl-5,6,7,8-tetrahydrofolate binding site.

Belongs to the TRAFAC class TrmE-Era-EngA-EngB-Septin-like GTPase superfamily. TrmE GTPase family. Homodimer. Heterotetramer of two MnmE and two MnmG subunits. Requires K(+) as cofactor.

It is found in the cytoplasm. In terms of biological role, exhibits a very high intrinsic GTPase hydrolysis rate. Involved in the addition of a carboxymethylaminomethyl (cmnm) group at the wobble position (U34) of certain tRNAs, forming tRNA-cmnm(5)s(2)U34. The chain is tRNA modification GTPase MnmE from Yersinia pestis.